The following is a 936-amino-acid chain: MLPPLQIEIEGTGISRPLSEHVNLLGGLLGQVIQEMAGPEMLELVETLRRLCKQAAQENRPEFREQAYTRIHSATYDELLWLLRAYTAFFHLVNQAEQQEIIRINRERAQQSTPERPRPESIDEAILALKQQGRTLDDVLTLLERLDIQPTVTAHPTEARRRSILYKQQHIAQMLSQQRRCQLTPEEQETLLLDLHNQITLLLGTAEVREERPTVRDEVEQGLYFIQSTIWEAVPRIYEDVRRALRRYYGADVDFRPFLRYRSWIGSDRDGNPYVTPEITRWTALTQRRLALQRYMEELRQLRRRLSLSDRYVAPPEELRRSLARDAREVSLPPHVLRQFRHESFRLKISYIMGRLHGLLQALDDPTQPAPDYDADAFVEDLRLLQRCLEACGLERIARHDQLTRLLVLAQTFGFHLVTLDVRQHSSVHEAAVAELLRLAGVENDYRALPESRRQELLAEELSNPRPLLPPGARVSEATRQVLETFAVIRELVQLDPRLVGSYIVSMTHTVSDLLEPMLLAKEVGLWHYERDPRTGKPGHVRCPIDFVPLFETIEDLEAAASRMEAILSHPVYRMQVAARGGFQEIMLGYSDSTKDGGYWMANWALHRAQEQLAEVCLRHGVDFRLFHGRGGTVGRGGGRANQAILAMPPVVHNGRIRFTEQGEVISFRYALPEIAHRHLEQIVNAMLRVVGLPAASGTDGTDPATRNRLMDELAARSMRAYRRLIDAPDFWSWYTRITPIDQISRLPIASRPVSRSSAREVDFESLRAIPWVFAWTQVRYLIPGWFGIGQALDELLQTSPEHLETLRTWYRSWPFFRTVLQNAQREMVRARLEIAAYYDRLLGDGPTAFHQMIEEDYHRARTAILRITDQESLLDHDPIIRKSVQLRNPYTDVLNLVQLELMRRIRSGAEADREPLRRALFLSINGIAAAMQSTG.

Residues His155 and Lys595 contribute to the active site.

Belongs to the PEPCase type 1 family. In terms of assembly, homotetramer. The cofactor is Mg(2+). It depends on Mn(2+) as a cofactor.

It catalyses the reaction oxaloacetate + phosphate = phosphoenolpyruvate + hydrogencarbonate. Exhibits positive allosteric property with acetyl-CoA and fructose 1,6-bisphosphate, and a negative one with L-aspartate and L-malate. Forms oxaloacetate, a four-carbon dicarboxylic acid source for the tricarboxylic acid cycle. This is Phosphoenolpyruvate carboxylase (ppc) from Rhodothermus marinus (Rhodothermus obamensis).